The chain runs to 240 residues: 1-(5-phosphoribosyl)-5-[(5-phosphoribosylamino)methylideneamino] imidazole-4-carboxamide isomerase (240 aa).

Catalysis depends on aspartate 8, which acts as the Proton acceptor. The Proton donor role is filled by aspartate 129.

Belongs to the HisA/HisF family.

It is found in the cytoplasm. It carries out the reaction 1-(5-phospho-beta-D-ribosyl)-5-[(5-phospho-beta-D-ribosylamino)methylideneamino]imidazole-4-carboxamide = 5-[(5-phospho-1-deoxy-D-ribulos-1-ylimino)methylamino]-1-(5-phospho-beta-D-ribosyl)imidazole-4-carboxamide. It functions in the pathway amino-acid biosynthesis; L-histidine biosynthesis; L-histidine from 5-phospho-alpha-D-ribose 1-diphosphate: step 4/9. The protein is 1-(5-phosphoribosyl)-5-[(5-phosphoribosylamino)methylideneamino] imidazole-4-carboxamide isomerase of Clostridium beijerinckii (strain ATCC 51743 / NCIMB 8052) (Clostridium acetobutylicum).